Reading from the N-terminus, the 300-residue chain is F-box/LRR-repeat protein 15 (300 aa).

Met-1 is modified (N-acetylmethionine). The region spanning 19 to 66 (LLDLPWEDVLLPHVLNWVPLRQLLRLQRVSRAFRALVQLHLARLRRFD) is the F-box domain. Residues 113-269 (NPQLRSVALA…EPSLSRLRKR (157 aa)) are interaction with SMURF1. LRR repeat units follow at residues 141-162 (RLQR…RGLA), 167-188 (ALEE…VYLA), 194-215 (GLRS…QELA), 220-241 (QLEH…RTLA), and 246-267 (ALRS…SRLR).

The protein belongs to the FBXL15 family. In terms of assembly, part of the SCF (SKP1-CUL1-F-box) E3 ubiquitin-protein ligase complex SCF(FBXL15) composed of CUL1, SKP1, RBX1 and FBXL15.

It localises to the cytoplasm. It functions in the pathway protein modification; protein ubiquitination. Substrate recognition component of a SCF (SKP1-CUL1-F-box protein) E3 ubiquitin-protein ligase complex which mediates the ubiquitination and subsequent proteasomal degradation of SMURF1, thereby acting as a positive regulator of the BMP signaling pathway. Required for dorsal/ventral pattern formation. Also mediates ubiquitination of SMURF2 and WWP2. Required for bone mass maintenance. The protein is F-box/LRR-repeat protein 15 (Fbxl15) of Rattus norvegicus (Rat).